We begin with the raw amino-acid sequence, 416 residues long: MSLYPYNSDEDEARKNSNYHDFDELVPSEEIENASKPSDTFPGRKSRNINVILDHSAFVRGIGNIKRWFNQEYIKAHIDPNADEEIYLNIYIPSYTLHEFDYVKKGTSMMATNAREAIRFIDKIFEKELNGEDETDPMNPDSKPGKKSIIYDLYIESPNESGPSWSECLNYKVHSPKIKEFPNFKTKFDSNLIGQHPIPQGESLESHNSFDETNYNNSSAYKQNNKLNDIQYENSQSYQNALANADELAEMPTRLRYLIRSCIYKRFIERKSFNSPLEEWKLVTEDPITKVWAKSFGIDCMNVNEAELLIFQSYDINQYQLYDPRHTFSVDDESHAPNSILQNTIDTTLYSYTKIDRPSKSKNKNKNKNTKKSTKPKQINGVVSDGCTGANGDFVKKERFDAINYAPRGTGDLWKP.

3 disordered regions span residues 1 to 21 (MSLY…NYHD), 195 to 218 (QHPI…YNNS), and 356 to 393 (DRPS…ANGD). Residues 12–21 (EARKNSNYHD) are compositionally biased toward basic and acidic residues. Over residues 360 to 375 (KSKNKNKNKNTKKSTK) the composition is skewed to basic residues.

The protein resides in the cytoplasm. Its function is as follows. Involved in nonsense-mediated decay of mRNAs containing premature stop codons. The chain is Nonsense-mediated decay protein 4 (NMD4) from Debaryomyces hansenii (strain ATCC 36239 / CBS 767 / BCRC 21394 / JCM 1990 / NBRC 0083 / IGC 2968) (Yeast).